The sequence spans 483 residues: Cobyric acid synthase (483 aa).

The 179-residue stretch at 252–430 folds into the GATase cobBQ-type domain; that stretch reads ALQVVAVAYP…LHRLFDSGPF (179 aa). Cysteine 333 serves as the catalytic Nucleophile. Histidine 422 is a catalytic residue.

Belongs to the CobB/CobQ family. CobQ subfamily.

It participates in cofactor biosynthesis; adenosylcobalamin biosynthesis. Functionally, catalyzes amidations at positions B, D, E, and G on adenosylcobyrinic A,C-diamide. NH(2) groups are provided by glutamine, and one molecule of ATP is hydrogenolyzed for each amidation. The protein is Cobyric acid synthase of Halorhodospira halophila (strain DSM 244 / SL1) (Ectothiorhodospira halophila (strain DSM 244 / SL1)).